Consider the following 175-residue polypeptide: Ribosome-binding factor A (175 aa).

Positions 131 to 175 (KPAGEADPYRDRGSVDEPSDAGGLVIRTSDGLEAENTGDDYQAED) are disordered. Positions 162-175 (LEAENTGDDYQAED) are enriched in acidic residues.

Belongs to the RbfA family. In terms of assembly, monomer. Binds 30S ribosomal subunits, but not 50S ribosomal subunits or 70S ribosomes.

The protein resides in the cytoplasm. One of several proteins that assist in the late maturation steps of the functional core of the 30S ribosomal subunit. Associates with free 30S ribosomal subunits (but not with 30S subunits that are part of 70S ribosomes or polysomes). Required for efficient processing of 16S rRNA. May interact with the 5'-terminal helix region of 16S rRNA. The sequence is that of Ribosome-binding factor A from Mycobacterium ulcerans (strain Agy99).